A 404-amino-acid chain; its full sequence is Ammonium transporter (404 aa).

9 consecutive transmembrane segments (helical) span residues Val7 to Tyr27, Phe44 to Ala64, Leu96 to Phe116, Phe125 to Trp145, Phe158 to Val178, Ile227 to Ile247, Leu254 to Val274, Phe277 to Leu297, and Ile352 to Ile372.

The protein belongs to the ammonia transporter channel (TC 1.A.11.2) family. In terms of assembly, interacts with NrgB for a correct localization of the latter. GlnK-AmtB complex interacts with TnrA.

The protein localises to the cell membrane. Its function is as follows. Functions as an ammonium and methylammonium transporter in the absence of glutamine. Required for ammonium utilization at low concentrations or at low pH values, when ammonium is the single nitrogen source. Required for binding of NrgB to the membrane. Interaction between GlnK-AmtB complex and TnrA protects TnrA from proteolytic degradation. The chain is Ammonium transporter from Bacillus subtilis (strain 168).